Consider the following 389-residue polypeptide: Putative nickel insertion protein (389 aa).

The protein belongs to the LarC family.

The sequence is that of Putative nickel insertion protein from Desulfotalea psychrophila (strain LSv54 / DSM 12343).